The following is a 366-amino-acid chain: Carbamoyl phosphate synthase small chain (366 aa).

The segment at 1–171 (MLEKRYLVLE…KTPYVSTGSD (171 aa)) is CPSase. L-glutamine-binding residues include serine 47, glycine 221, and glycine 223. The Glutamine amidotransferase type-1 domain maps to 173-360 (SVVLLDFGKK…ITMMKDFKEK (188 aa)). Catalysis depends on cysteine 248, which acts as the Nucleophile. L-glutamine-binding residues include leucine 249, glutamine 252, asparagine 290, glycine 292, and tyrosine 293. Active-site residues include histidine 333 and glutamate 335.

This sequence belongs to the CarA family. In terms of assembly, composed of two chains; the small (or glutamine) chain promotes the hydrolysis of glutamine to ammonia, which is used by the large (or ammonia) chain to synthesize carbamoyl phosphate. Tetramer of heterodimers (alpha,beta)4.

The catalysed reaction is hydrogencarbonate + L-glutamine + 2 ATP + H2O = carbamoyl phosphate + L-glutamate + 2 ADP + phosphate + 2 H(+). It catalyses the reaction L-glutamine + H2O = L-glutamate + NH4(+). Its pathway is amino-acid biosynthesis; L-arginine biosynthesis; carbamoyl phosphate from bicarbonate: step 1/1. It functions in the pathway pyrimidine metabolism; UMP biosynthesis via de novo pathway; (S)-dihydroorotate from bicarbonate: step 1/3. Small subunit of the glutamine-dependent carbamoyl phosphate synthetase (CPSase). CPSase catalyzes the formation of carbamoyl phosphate from the ammonia moiety of glutamine, carbonate, and phosphate donated by ATP, constituting the first step of 2 biosynthetic pathways, one leading to arginine and/or urea and the other to pyrimidine nucleotides. The small subunit (glutamine amidotransferase) binds and cleaves glutamine to supply the large subunit with the substrate ammonia. The protein is Carbamoyl phosphate synthase small chain of Staphylococcus epidermidis (strain ATCC 35984 / DSM 28319 / BCRC 17069 / CCUG 31568 / BM 3577 / RP62A).